The following is a 431-amino-acid chain: Adenylosuccinate synthetase (431 aa).

Residues 13–19 (GDEGKGK) and 41–43 (GHT) each bind GTP. The active-site Proton acceptor is aspartate 14. Residues aspartate 14 and glycine 41 each contribute to the Mg(2+) site. IMP is bound by residues 14-17 (DEGK), 39-42 (NAGH), threonine 130, arginine 144, glutamine 225, threonine 240, and arginine 304. The active-site Proton donor is the histidine 42. 300-306 (ATTGRKR) serves as a coordination point for substrate. Residues arginine 306, 332–334 (KLD), and 415–417 (STG) contribute to the GTP site.

Belongs to the adenylosuccinate synthetase family. As to quaternary structure, homodimer. The cofactor is Mg(2+).

The protein resides in the cytoplasm. The catalysed reaction is IMP + L-aspartate + GTP = N(6)-(1,2-dicarboxyethyl)-AMP + GDP + phosphate + 2 H(+). The protein operates within purine metabolism; AMP biosynthesis via de novo pathway; AMP from IMP: step 1/2. Plays an important role in the de novo pathway of purine nucleotide biosynthesis. Catalyzes the first committed step in the biosynthesis of AMP from IMP. The sequence is that of Adenylosuccinate synthetase from Shewanella amazonensis (strain ATCC BAA-1098 / SB2B).